We begin with the raw amino-acid sequence, 123 residues long: NHL-repeat-containing protein 4 (123 aa).

2 NHL repeats span residues 35–78 and 79–119; these read QPLG…FPRA and GPPI…YQGL.

The polypeptide is NHL-repeat-containing protein 4 (NHLRC4) (Homo sapiens (Human)).